The sequence spans 218 residues: Large ribosomal subunit protein uL3 (218 aa).

Belongs to the universal ribosomal protein uL3 family. Part of the 50S ribosomal subunit. Forms a cluster with proteins L14 and L19.

One of the primary rRNA binding proteins, it binds directly near the 3'-end of the 23S rRNA, where it nucleates assembly of the 50S subunit. This is Large ribosomal subunit protein uL3 from Mycolicibacterium gilvum (strain PYR-GCK) (Mycobacterium gilvum (strain PYR-GCK)).